The following is a 310-amino-acid chain: tRNA dimethylallyltransferase (310 aa).

11–18 (GPTGVGKT) lines the ATP pocket. 13–18 (TGVGKT) contributes to the substrate binding site.

Belongs to the IPP transferase family. In terms of assembly, monomer. Requires Mg(2+) as cofactor.

The enzyme catalyses adenosine(37) in tRNA + dimethylallyl diphosphate = N(6)-dimethylallyladenosine(37) in tRNA + diphosphate. In terms of biological role, catalyzes the transfer of a dimethylallyl group onto the adenine at position 37 in tRNAs that read codons beginning with uridine, leading to the formation of N6-(dimethylallyl)adenosine (i(6)A). The polypeptide is tRNA dimethylallyltransferase (Latilactobacillus sakei subsp. sakei (strain 23K) (Lactobacillus sakei subsp. sakei)).